We begin with the raw amino-acid sequence, 857 residues long: DNA mismatch repair protein MutS (857 aa).

608–615 (GPNMSGKS) provides a ligand contact to ATP.

The protein belongs to the DNA mismatch repair MutS family.

Its function is as follows. This protein is involved in the repair of mismatches in DNA. It is possible that it carries out the mismatch recognition step. This protein has a weak ATPase activity. The sequence is that of DNA mismatch repair protein MutS from Lacticaseibacillus casei (strain BL23) (Lactobacillus casei).